The chain runs to 262 residues: Hydroxyethylthiazole kinase (262 aa).

Met50 contacts substrate. Residues Arg125 and Thr171 each contribute to the ATP site. Gly198 contributes to the substrate binding site.

It belongs to the Thz kinase family. It depends on Mg(2+) as a cofactor.

It catalyses the reaction 5-(2-hydroxyethyl)-4-methylthiazole + ATP = 4-methyl-5-(2-phosphooxyethyl)-thiazole + ADP + H(+). It functions in the pathway cofactor biosynthesis; thiamine diphosphate biosynthesis; 4-methyl-5-(2-phosphoethyl)-thiazole from 5-(2-hydroxyethyl)-4-methylthiazole: step 1/1. Catalyzes the phosphorylation of the hydroxyl group of 4-methyl-5-beta-hydroxyethylthiazole (THZ). The chain is Hydroxyethylthiazole kinase from Escherichia coli O17:K52:H18 (strain UMN026 / ExPEC).